A 542-amino-acid polypeptide reads, in one-letter code: MTFSEILDRVGSMGRFQFLHVAILGLPILNMANHNLLQIFTAATPVHHCRPPPNASTGPWVLPMGPNGKPERCLRFVHPPNASLPNETQRATEPCLDGWVYNSTKDSIVTEWDLVCNSNKLKEMAQSIFMAGILIGGLVLGDLSDRFGRRPILTCSYLLLAASGSGAAFSPTFPIYMVFRFLCGFGISGITLSTVILNVEWVPTRMRAIMSTALGYCYTFGQFILPGLAYAIPQWRWLQLTVSIPFFIFFLSSWWTPESIRWLVLSGKSSKALKILRRVAAFNGKKEEGERLSLEELKLNLQKEIALAKAKYTASDLFRIPMLRRMTFCLSLAWFATGFAYYSLAMGVEEFGVNLYILQIIFGGVDVPAKFITILSLSYLGRHTTQAAALLLAGGAILALTFVPLDLQTVRTVLAVFGKGCLPSSFSCLFLYTSELYPTVIRQTGMGVSNLWTRVGSMLSPLVKITGEVQPFIPNIIYGITALLGGSAAFFLPETLNQPLPETIEDLENWSLRAKKPKQEPEVEKASQRIPLQPHGPGLGSS.

Over 1–20 (MTFSEILDRVGSMGRFQFLH) the chain is Cytoplasmic. At S4 the chain carries Phosphoserine. The helical transmembrane segment at 21–41 (VAILGLPILNMANHNLLQIFT) threads the bilayer. Over 42 to 123 (AATPVHHCRP…LVCNSNKLKE (82 aa)) the chain is Extracellular. N-linked (GlcNAc...) asparagine glycosylation is present at N86. The helical transmembrane segment at 124 to 144 (MAQSIFMAGILIGGLVLGDLS) threads the bilayer. The Cytoplasmic segment spans residues 145-154 (DRFGRRPILT). A helical transmembrane segment spans residues 155-175 (CSYLLLAASGSGAAFSPTFPI). Position 176 (Y176) is a topological domain, extracellular. The helical transmembrane segment at 177 to 197 (MVFRFLCGFGISGITLSTVIL) threads the bilayer. Residues 198 to 212 (NVEWVPTRMRAIMST) are Cytoplasmic-facing. The helical transmembrane segment at 213–233 (ALGYCYTFGQFILPGLAYAIP) threads the bilayer. At 234 to 236 (QWR) the chain is on the extracellular side. A helical transmembrane segment spans residues 237–257 (WLQLTVSIPFFIFFLSSWWTP). Residues 258–327 (ESIRWLVLSG…FRIPMLRRMT (70 aa)) are Cytoplasmic-facing. A helical membrane pass occupies residues 328 to 348 (FCLSLAWFATGFAYYSLAMGV). The Extracellular portion of the chain corresponds to 349 to 354 (EEFGVN). The helical transmembrane segment at 355-375 (LYILQIIFGGVDVPAKFITIL) threads the bilayer. The Cytoplasmic portion of the chain corresponds to 376–386 (SLSYLGRHTTQ). A helical membrane pass occupies residues 387–407 (AAALLLAGGAILALTFVPLDL). The Extracellular segment spans residues 408–471 (QTVRTVLAVF…LVKITGEVQP (64 aa)). The helical transmembrane segment at 472–492 (FIPNIIYGITALLGGSAAFFL) threads the bilayer. At 493-542 (PETLNQPLPETIEDLENWSLRAKKPKQEPEVEKASQRIPLQPHGPGLGSS) the chain is on the cytoplasmic side. Residues 515-542 (KKPKQEPEVEKASQRIPLQPHGPGLGSS) form a disordered region. Basic and acidic residues predominate over residues 517–527 (PKQEPEVEKAS).

The protein belongs to the major facilitator (TC 2.A.1) superfamily. Organic cation transporter (TC 2.A.1.19) family.

The protein resides in the basolateral cell membrane. The enzyme catalyses estrone 3-sulfate(out) + glutarate(in) = estrone 3-sulfate(in) + glutarate(out). The catalysed reaction is estrone 3-sulfate(in) + 2-oxoglutarate(out) = estrone 3-sulfate(out) + 2-oxoglutarate(in). It carries out the reaction glutarate(in) + 2-oxoglutarate(out) = glutarate(out) + 2-oxoglutarate(in). It catalyses the reaction urate(in) + 2-oxoglutarate(out) = urate(out) + 2-oxoglutarate(in). The enzyme catalyses taurocholate(out) + glutarate(in) = taurocholate(in) + glutarate(out). The catalysed reaction is dehydroepiandrosterone 3-sulfate(out) + glutarate(in) = dehydroepiandrosterone 3-sulfate(in) + glutarate(out). It carries out the reaction prostaglandin F2alpha(out) + glutarate(in) = prostaglandin F2alpha(in) + glutarate(out). It catalyses the reaction prostaglandin F2alpha(out) + 2-oxoglutarate(in) = prostaglandin F2alpha(in) + 2-oxoglutarate(out). The enzyme catalyses (R)-carnitine(out) + 2-oxoglutarate(in) = (R)-carnitine(in) + 2-oxoglutarate(out). The catalysed reaction is glutarate(in) + (R)-carnitine(out) = glutarate(out) + (R)-carnitine(in). It carries out the reaction prostaglandin E2(out) + 2-oxoglutarate(in) = prostaglandin E2(in) + 2-oxoglutarate(out). It catalyses the reaction prostaglandin E2(out) + glutarate(in) = prostaglandin E2(in) + glutarate(out). The enzyme catalyses urate(in) + glutarate(out) = urate(out) + glutarate(in). The catalysed reaction is taurocholate(out) + 2-oxoglutarate(in) = taurocholate(in) + 2-oxoglutarate(out). It carries out the reaction dehydroepiandrosterone 3-sulfate(out) + 2-oxoglutarate(in) = dehydroepiandrosterone 3-sulfate(in) + 2-oxoglutarate(out). It catalyses the reaction kynurenate(out) + a dicarboxylate(in) = kynurenate(in) + a dicarboxylate(out). The enzyme catalyses (indol-3-yl)acetate(out) + a dicarboxylate(in) = (indol-3-yl)acetate(in) + a dicarboxylate(out). The catalysed reaction is indoxyl sulfate(out) + a dicarboxylate(in) = indoxyl sulfate(in) + a dicarboxylate(out). It carries out the reaction N-benzoylglycine(out) + a dicarboxylate(in) = N-benzoylglycine(in) + a dicarboxylate(out). It catalyses the reaction 3-carboxy-4-methyl-5-propyl-2-furanpropanoate(out) + a dicarboxylate(in) = 3-carboxy-4-methyl-5-propyl-2-furanpropanoate(in) + a dicarboxylate(out). The enzyme catalyses (6R)-L-erythro-5,6,7,8-tetrahydrobiopterin(out) + a dicarboxylate(in) = (6R)-L-erythro-5,6,7,8-tetrahydrobiopterin(in) + a dicarboxylate(out). The catalysed reaction is L-erythro-7,8-dihydrobiopterin(out) + a dicarboxylate(in) = L-erythro-7,8-dihydrobiopterin(in) + a dicarboxylate(out). It carries out the reaction L-sepiapterin(out) + a dicarboxylate(in) = L-sepiapterin(in) + a dicarboxylate(out). In terms of biological role, functions as an organic anion/dicarboxylate exchanger that couples organic anion uptake indirectly to the sodium gradient. Transports organic anions such as estrone 3-sulfate (E1S) and urate in exchange for dicarboxylates such as glutarate or ketoglutarate (2-oxoglutarate). Plays an important role in the excretion of endogenous and exogenous organic anions, especially from the kidney and the brain. E1S transport is pH- and chloride-dependent and may also involve E1S/cGMP exchange. Responsible for the transport of prostaglandin E2 (PGE2) and prostaglandin F2(alpha) (PGF2(alpha)) in the basolateral side of the renal tubule. Involved in the transport of neuroactive tryptophan metabolites kynurenate and xanthurenate. Functions as a biopterin transporters involved in the uptake and the secretion of coenzymes tetrahydrobiopterin (BH4), dihydrobiopterin (BH2) and sepiapterin to urine, thereby determining baseline levels of blood biopterins. May be involved in the basolateral transport of steviol, a metabolite of the popular sugar substitute stevioside. May participate in the detoxification/ renal excretion of drugs and xenobiotics, such as the histamine H(2)-receptor antagonists fexofenadine and cimetidine, the antibiotic benzylpenicillin (PCG), the anionic herbicide 2,4-dichloro-phenoxyacetate (2,4-D), the diagnostic agent p-aminohippurate (PAH), the antiviral acyclovir (ACV), and the mycotoxin ochratoxin (OTA), by transporting these exogenous organic anions across the cell membrane in exchange for dicarboxylates such as 2-oxoglutarate. Contributes to the renal uptake of potent uremic toxins (indoxyl sulfate (IS), indole acetate (IA), hippurate/N-benzoylglycine (HA) and 3-carboxy-4-methyl-5-propyl-2-furanpropionate (CMPF)), pravastatin, PCG, E1S and dehydroepiandrosterone sulfate (DHEAS), and is partly involved in the renal uptake of temocaprilat (an angiotensin-converting enzyme (ACE) inhibitor). May contribute to the release of cortisol in the adrenals. Involved in one of the detoxification systems on the choroid plexus (CP), removes substrates such as E1S or taurocholate (TC), PCG, 2,4-D and PAH, from the cerebrospinal fluid (CSF) to the blood for eventual excretion in urine and bile. Also contributes to the uptake of several other organic compounds such as the prostanoids prostaglandin E(2) and prostaglandin F(2-alpha), L-carnitine, and the therapeutic drugs allopurinol, 6-mercaptopurine (6-MP) and 5-fluorouracil (5-FU). Mediates the transport of PAH, PCG, and the statins pravastatin and pitavastatin, from the cerebrum into the blood circulation across the blood-brain barrier (BBB). In summary, plays a role in the efflux of drugs and xenobiotics, helping reduce their undesired toxicological effects on the body. The polypeptide is Organic anion transporter 3 (SLC22A8) (Pongo abelii (Sumatran orangutan)).